We begin with the raw amino-acid sequence, 645 residues long: 1-deoxy-D-xylulose-5-phosphate synthase 1 (645 aa).

Thiamine diphosphate contacts are provided by residues H79 and 120 to 122 (GHS). A Mg(2+)-binding site is contributed by D151. Thiamine diphosphate is bound by residues 152-153 (GS), N180, Y291, and E373. N180 lines the Mg(2+) pocket.

This sequence belongs to the transketolase family. DXPS subfamily. Homodimer. The cofactor is Mg(2+). It depends on thiamine diphosphate as a cofactor.

The enzyme catalyses D-glyceraldehyde 3-phosphate + pyruvate + H(+) = 1-deoxy-D-xylulose 5-phosphate + CO2. Its pathway is metabolic intermediate biosynthesis; 1-deoxy-D-xylulose 5-phosphate biosynthesis; 1-deoxy-D-xylulose 5-phosphate from D-glyceraldehyde 3-phosphate and pyruvate: step 1/1. Functionally, catalyzes the acyloin condensation reaction between C atoms 2 and 3 of pyruvate and glyceraldehyde 3-phosphate to yield 1-deoxy-D-xylulose-5-phosphate (DXP). This chain is 1-deoxy-D-xylulose-5-phosphate synthase 1, found in Rhodospirillum rubrum (strain ATCC 11170 / ATH 1.1.1 / DSM 467 / LMG 4362 / NCIMB 8255 / S1).